A 284-amino-acid chain; its full sequence is Bifunctional protein FolD (284 aa).

NADP(+) is bound by residues 165–167 (GRS) and Ser190.

The protein belongs to the tetrahydrofolate dehydrogenase/cyclohydrolase family. As to quaternary structure, homodimer.

The enzyme catalyses (6R)-5,10-methylene-5,6,7,8-tetrahydrofolate + NADP(+) = (6R)-5,10-methenyltetrahydrofolate + NADPH. The catalysed reaction is (6R)-5,10-methenyltetrahydrofolate + H2O = (6R)-10-formyltetrahydrofolate + H(+). It functions in the pathway one-carbon metabolism; tetrahydrofolate interconversion. In terms of biological role, catalyzes the oxidation of 5,10-methylenetetrahydrofolate to 5,10-methenyltetrahydrofolate and then the hydrolysis of 5,10-methenyltetrahydrofolate to 10-formyltetrahydrofolate. The chain is Bifunctional protein FolD from Streptococcus pyogenes serotype M2 (strain MGAS10270).